A 56-amino-acid polypeptide reads, in one-letter code: Large ribosomal subunit protein bL33 (56 aa).

It belongs to the bacterial ribosomal protein bL33 family.

This Glaesserella parasuis serovar 5 (strain SH0165) (Haemophilus parasuis) protein is Large ribosomal subunit protein bL33.